The sequence spans 249 residues: Nicotinamide/nicotinic acid mononucleotide adenylyltransferase (249 aa).

Positions 34 and 35 each coordinate NAD(+). The ATP site is built by His42 and Lys75. 6 residues coordinate NAD(+): Thr112, Gly141, Asp143, Trp154, Arg173, and Asn204. 209 to 210 (SR) provides a ligand contact to ATP.

The protein belongs to the eukaryotic NMN adenylyltransferase family. A divalent metal cation is required as a cofactor.

It catalyses the reaction beta-nicotinamide D-ribonucleotide + ATP + H(+) = diphosphate + NAD(+). It carries out the reaction nicotinate beta-D-ribonucleotide + ATP + H(+) = deamido-NAD(+) + diphosphate. It functions in the pathway cofactor biosynthesis; NAD(+) biosynthesis; deamido-NAD(+) from nicotinate D-ribonucleotide: step 1/1. Its pathway is cofactor biosynthesis; NAD(+) biosynthesis; NAD(+) from nicotinamide D-ribonucleotide: step 1/1. Catalyzes the formation of NAD(+) from nicotinamide mononucleotide (NMN) and ATP. Can also use the deamidated form; nicotinic acid mononucleotide (NaMN) as substrate. The chain is Nicotinamide/nicotinic acid mononucleotide adenylyltransferase from Oryza sativa subsp. japonica (Rice).